Reading from the N-terminus, the 458-residue chain is Phosphoglucosamine mutase (458 aa).

Ser-108 serves as the catalytic Phosphoserine intermediate. Mg(2+)-binding residues include Ser-108, Asp-247, Asp-249, and Asp-251. Ser-108 is subject to Phosphoserine.

It belongs to the phosphohexose mutase family. Requires Mg(2+) as cofactor. In terms of processing, activated by phosphorylation.

It carries out the reaction alpha-D-glucosamine 1-phosphate = D-glucosamine 6-phosphate. Functionally, catalyzes the conversion of glucosamine-6-phosphate to glucosamine-1-phosphate. In Thiobacillus denitrificans (strain ATCC 25259 / T1), this protein is Phosphoglucosamine mutase.